Here is a 475-residue protein sequence, read N- to C-terminus: Ribosomal protein uS12 methylthiotransferase RimO (475 aa).

The region spanning 36-150 (NKINFISLGC…ILKAVQSTQK (115 aa)) is the MTTase N-terminal domain. [4Fe-4S] cluster is bound by residues C45, C81, C113, C185, C189, and C192. The region spanning 171–403 (STPKHYAYLK…MQVQKKVVKK (233 aa)) is the Radical SAM core domain. Residues 406 to 475 (KKMIGKKIAV…ADYDLVGHVI (70 aa)) enclose the TRAM domain.

It belongs to the methylthiotransferase family. RimO subfamily. [4Fe-4S] cluster is required as a cofactor.

It is found in the cytoplasm. It carries out the reaction L-aspartate(89)-[ribosomal protein uS12]-hydrogen + (sulfur carrier)-SH + AH2 + 2 S-adenosyl-L-methionine = 3-methylsulfanyl-L-aspartate(89)-[ribosomal protein uS12]-hydrogen + (sulfur carrier)-H + 5'-deoxyadenosine + L-methionine + A + S-adenosyl-L-homocysteine + 2 H(+). Catalyzes the methylthiolation of an aspartic acid residue of ribosomal protein uS12. This chain is Ribosomal protein uS12 methylthiotransferase RimO, found in Protochlamydia amoebophila (strain UWE25).